A 653-amino-acid chain; its full sequence is Transmembrane and coiled-coil domains protein 1 (653 aa).

Position 1 is an N-acetylmethionine (Met1). 4 disordered regions span residues 1–35 (MEPS…QKLS), 58–78 (HQRR…ADPE), 112–165 (PPKM…APTS), and 204–227 (TSSA…TPDP). Topologically, residues 1-591 (MEPSGSEQLF…ARNLLGKLIN (591 aa)) are cytoplasmic. A compositionally biased stretch (basic and acidic residues) spans 20-34 (QDAEARKQTESEQKL). Positions 64–74 (SVSPHDVQQIQ) are enriched in polar residues. Over residues 113–125 (PKMKRGTSLHSRR) the composition is skewed to basic residues. The segment covering 135 to 144 (PQINRKSGQE) has biased composition (polar residues). A compositionally biased stretch (low complexity) spans 153–165 (RPRSSSTTDAPTS). The span at 204-218 (TSSAVASSTDGSIHT) shows a compositional bias: polar residues. Residues 228–313 (QRTKAAIAHL…RKLREVEQNG (86 aa)) are a coiled coil. Residues Ser382 and Ser414 each carry the phosphoserine modification. Positions 415–437 (PKYGSEEDCSSATSGSVGANSTT) are disordered. A compositionally biased stretch (polar residues) spans 424 to 437 (SSATSGSVGANSTT). The stretch at 458 to 576 (GFDALLHEIQ…QQQQVVQLEG (119 aa)) forms a coiled coil. 2 consecutive transmembrane segments (helical) span residues 592 to 612 (ILLA…NCVV) and 625 to 645 (LFLV…FSYV). Over 646–653 (ERFFSSPR) the chain is Cytoplasmic.

This sequence belongs to the TEX28 family. As to quaternary structure, may form homodimers and heterodimers with TMCC2 or TMCC3 via the coiled-coil domains. Interacts with ribosomal proteins RPL4 and RPS6.

The protein localises to the endoplasmic reticulum membrane. Functionally, endoplasmic reticulum membrane protein that promotes endoplasmic reticulum-associated endosome fission. Localizes to contact sites between the endoplasmic reticulum and endosomes and acts by promoting recruitment of the endoplasmic reticulum to endosome tubules for fission. Endosome membrane fission of early and late endosomes is essential to separate regions destined for lysosomal degradation from carriers to be recycled to the plasma membrane. This Homo sapiens (Human) protein is Transmembrane and coiled-coil domains protein 1.